The sequence spans 481 residues: Phosphoglycerate kinase 1, chloroplastic (481 aa).

A chloroplast-targeting transit peptide spans 1 to 75; the sequence is MASAAASSAF…VRGKGSRGVV (75 aa). Residue serine 81 is modified to Phosphoserine. The (2R)-3-phosphoglycerate site is built by alanine 99, aspartate 100, asparagine 102, arginine 116, threonine 138, histidine 139, glycine 141, arginine 142, arginine 197, histidine 229, and arginine 230. An ADP-binding site is contributed by glycine 275. Glycine 275 contributes to the CDP binding site. AMP contacts are provided by lysine 277 and lysine 281. Lysine 281 lines the ATP pocket. An ADP-binding site is contributed by glycine 299. Glycine 299 is a CDP binding site. Residues glycine 300 and glycine 372 each contribute to the AMP site. Glycine 300 and glycine 372 together coordinate ATP. 2 residues coordinate CDP: glycine 397 and phenylalanine 402. Residue phenylalanine 402 participates in ADP binding. Residue glutamate 403 participates in AMP binding. Residues glutamate 403, aspartate 434, and serine 435 each coordinate ATP. Aspartate 434 is a Mg(2+) binding site.

This sequence belongs to the phosphoglycerate kinase family. Monomer. Binds to FTSZ2-1 and FTSZ2-2. Requires Mg(2+) as cofactor.

The protein localises to the plastid. The protein resides in the chloroplast. The enzyme catalyses (2R)-3-phosphoglycerate + ATP = (2R)-3-phospho-glyceroyl phosphate + ADP. The protein operates within carbohydrate biosynthesis; Calvin cycle. Its function is as follows. May trigger the phosphorylation of FTSZ2-1 and FTSZ2-2. The sequence is that of Phosphoglycerate kinase 1, chloroplastic from Arabidopsis thaliana (Mouse-ear cress).